We begin with the raw amino-acid sequence, 239 residues long: Carboxy-S-adenosyl-L-methionine synthase (239 aa).

S-adenosyl-L-methionine is bound by residues tyrosine 35, 64-66, 88-89, and arginine 195; these read GCS and DN.

This sequence belongs to the class I-like SAM-binding methyltransferase superfamily. Cx-SAM synthase family. In terms of assembly, homodimer.

It catalyses the reaction prephenate + S-adenosyl-L-methionine = carboxy-S-adenosyl-L-methionine + 3-phenylpyruvate + H2O. Catalyzes the conversion of S-adenosyl-L-methionine (SAM) to carboxy-S-adenosyl-L-methionine (Cx-SAM). In Helicobacter pylori (strain HPAG1), this protein is Carboxy-S-adenosyl-L-methionine synthase.